The primary structure comprises 565 residues: NAD-dependent malic enzyme (565 aa).

Tyr104 acts as the Proton donor in catalysis. Arg157 lines the NAD(+) pocket. Residue Lys175 is the Proton acceptor of the active site. Residues Glu246, Asp247, and Asp270 each coordinate a divalent metal cation. 2 residues coordinate NAD(+): Asp270 and Asn418.

This sequence belongs to the malic enzymes family. As to quaternary structure, homotetramer. The cofactor is Mg(2+). Mn(2+) is required as a cofactor.

The catalysed reaction is (S)-malate + NAD(+) = pyruvate + CO2 + NADH. It catalyses the reaction oxaloacetate + H(+) = pyruvate + CO2. The sequence is that of NAD-dependent malic enzyme from Salmonella agona (strain SL483).